Consider the following 188-residue polypeptide: HTH-type transcriptional regulator Mb3439c (188 aa).

The region spanning Glu-17 to Leu-77 is the HTH tetR-type domain. Residues Ser-40 to Phe-59 constitute a DNA-binding region (H-T-H motif).

In terms of biological role, negatively regulates the expression of sulfate ester dioxygenase Mb3440 and its own expression. The polypeptide is HTH-type transcriptional regulator Mb3439c (Mycobacterium bovis (strain ATCC BAA-935 / AF2122/97)).